Consider the following 412-residue polypeptide: MPIMGSSVYITVELAIAVLAILGNVLVCWAVWLNSNLQNVTNYFVVSLAAADIAVGVLAIPFAITISTGFCAACHGCLFIACFVLVLTQSSIFSLLAIAIDRYIAIRIPLRYNGLVTGTRAKGIIAICWVLSFAIGLTPMLGWNNCGQPKEGKNHSQGCGEGQVACLFEDVVPMNYMVYFNFFACVLVPLLLMLGVYLRIFLAARRQLKQMESQPLPGERARSTLQKEVHAAKSLAIIVGLFALCWLPLHIINCFTFFCPDCSHAPLWLMYLAIVLSHTNSVVNPFIYAYRIREFRQTFRKIIRSHVLRQQEPFKAAGTSARVLAAHGSDGEQVSLRLNGHPPGVWANGSAPHPERRPNGYALGLVSGGSAQESQGNTGLPDVELLSHELKGVCPEPPGLDDPLAQDGAGVS.

At 1–7 (MPIMGSS) the chain is on the extracellular side. A helical membrane pass occupies residues 8–32 (VYITVELAIAVLAILGNVLVCWAVW). Over 33–42 (LNSNLQNVTN) the chain is Cytoplasmic. The helical transmembrane segment at 43 to 66 (YFVVSLAAADIAVGVLAIPFAITI) threads the bilayer. At 67–77 (STGFCAACHGC) the chain is on the extracellular side. Disulfide bonds link Cys71–Cys159, Cys74–Cys146, and Cys77–Cys166. A helical membrane pass occupies residues 78–100 (LFIACFVLVLTQSSIFSLLAIAI). At 101 to 120 (DRYIAIRIPLRYNGLVTGTR) the chain is on the cytoplasmic side. A helical transmembrane segment spans residues 121–143 (AKGIIAICWVLSFAIGLTPMLGW). Over 144-173 (NNCGQPKEGKNHSQGCGEGQVACLFEDVVP) the chain is Extracellular. Asn154 carries an N-linked (GlcNAc...) asparagine glycan. Glu169 is an adenosine binding site. The chain crosses the membrane as a helical span at residues 174–198 (MNYMVYFNFFACVLVPLLLMLGVYL). Over 199–234 (RIFLAARRQLKQMESQPLPGERARSTLQKEVHAAKS) the chain is Cytoplasmic. A helical membrane pass occupies residues 235–258 (LAIIVGLFALCWLPLHIINCFTFF). Residue Asn253 participates in adenosine binding. Cys259 and Cys262 form a disulfide bridge. Residues 259–266 (CPDCSHAP) lie on the Extracellular side of the membrane. A helical membrane pass occupies residues 267-290 (LWLMYLAIVLSHTNSVVNPFIYAY). Residues Ser277 and His278 each contribute to the adenosine site. The Cytoplasmic segment spans residues 291-412 (RIREFRQTFR…PLAQDGAGVS (122 aa)). The disordered stretch occupies residues 391 to 412 (KGVCPEPPGLDDPLAQDGAGVS).

It belongs to the G-protein coupled receptor 1 family. Interacts (via cytoplasmic C-terminal domain) with USP4; the interaction is direct. May interact with DRD4. Interacts with NECAB2. Interacts (via cytoplasmic C-terminal domain) with GAS2L2; interaction enhances receptor-mediated adenylyl cyclase activity. Ubiquitinated. Deubiquitinated by USP4; leading to stabilization and expression at the cell surface.

It localises to the cell membrane. Receptor for adenosine. The activity of this receptor is mediated by G proteins which activate adenylyl cyclase. The protein is Adenosine receptor A2a (ADORA2A) of Homo sapiens (Human).